The chain runs to 282 residues: 4-diphosphocytidyl-2-C-methyl-D-erythritol kinase (282 aa).

Lys9 is an active-site residue. Pro98–Ser108 contacts ATP. Residue Asp140 is part of the active site.

Belongs to the GHMP kinase family. IspE subfamily. In terms of assembly, homodimer.

The catalysed reaction is 4-CDP-2-C-methyl-D-erythritol + ATP = 4-CDP-2-C-methyl-D-erythritol 2-phosphate + ADP + H(+). Its pathway is isoprenoid biosynthesis; isopentenyl diphosphate biosynthesis via DXP pathway; isopentenyl diphosphate from 1-deoxy-D-xylulose 5-phosphate: step 3/6. Its function is as follows. Catalyzes the phosphorylation of the position 2 hydroxy group of 4-diphosphocytidyl-2C-methyl-D-erythritol. The polypeptide is 4-diphosphocytidyl-2-C-methyl-D-erythritol kinase (Salmonella heidelberg (strain SL476)).